The chain runs to 326 residues: Olfactory receptor 11H12 (326 aa).

At 1–44 the chain is on the extracellular side; sequence MCPLTLQVTGLMNVSEPNSSFAFVNEFILQGFTCEWTIQIFLFS. 2 N-linked (GlcNAc...) asparagine glycosylation sites follow: Asn13 and Asn18. Residues 45-65 traverse the membrane as a helical segment; it reads LFTTTYALTITGNGAIAFVLW. Residues 66–72 lie on the Cytoplasmic side of the membrane; it reads CDWRLHT. Residues 73–93 form a helical membrane-spanning segment; sequence PMYMFLGNFSFLEIWYVSSTV. Residues 94–112 lie on the Extracellular side of the membrane; it reads PKMLVNFLSEKKNISFAGC. Residue Asn106 is glycosylated (N-linked (GlcNAc...) asparagine). A disulfide bridge connects residues Cys112 and Cys194. Residues 113–133 form a helical membrane-spanning segment; the sequence is FLQFYFFFSLGTSECLLLTVM. The Cytoplasmic segment spans residues 134–158; the sequence is AFDQYLAICRPLLYPNIMTGHLCAK. The helical transmembrane segment at 159-179 threads the bilayer; that stretch reads LVILCWVCGFLWFLIPIVLIS. At 180–216 the chain is on the extracellular side; it reads QMPFCGPNIIDHVVCDPGPRFALDCVSAPRIQLFCYT. The chain crosses the membrane as a helical span at residues 217 to 237; the sequence is LSSLVIFGNFLFIIGSYTLVL. At 238–259 the chain is on the cytoplasmic side; that stretch reads KAVLGMPSSTGRHKAFSTCGSH. A helical transmembrane segment spans residues 260–280; sequence LAVVSLCYSSLMVMYVSPGLG. Topologically, residues 281 to 287 are extracellular; it reads HSTGMQK. Residues 288 to 308 traverse the membrane as a helical segment; the sequence is IETLFYAMVTPLFNPLIYSLQ. Residues 309 to 326 lie on the Cytoplasmic side of the membrane; that stretch reads NKEIKAALRKVLGSSNII.

This sequence belongs to the G-protein coupled receptor 1 family.

It is found in the cell membrane. Its function is as follows. Odorant receptor. The sequence is that of Olfactory receptor 11H12 (OR11H12) from Homo sapiens (Human).